A 361-amino-acid chain; its full sequence is Cyclic AMP receptor-like protein C (361 aa).

Residues 1–18 are Extracellular-facing; it reads MGIEESQICNPSDREFLS. The helical transmembrane segment at 19-39 threads the bilayer; sequence VDILNIVTSSLSLMGSALTII. Residues 40–113 are Cytoplasmic-facing; the sequence is SYIWKKVRRH…HGTYKQPTSK (74 aa). Residues 114–134 traverse the membrane as a helical segment; sequence LPLLIFMLSIADFFTSFFIII. Residues 135-166 are Extracellular-facing; sequence SQSYLINNSKSYSTPYSPDLKIHFSPCIILRA. Residues 167–187 form a helical membrane-spanning segment; that stretch reads IIQFFFLSTFFWTTCISYYLF. Residues 188-197 lie on the Cytoplasmic side of the membrane; the sequence is HQLSSPGEEK. The helical transmembrane segment at 198–218 threads the bilayer; sequence YLLAIFNVVSWGIPFAISMVI. Over 219-238 the chain is Extracellular; sequence TMTNSIVVNSDGWCEVAKPM. A helical membrane pass occupies residues 239-259; sequence ELSLWFLPLFLCLLVCSIYYF. Residues 260 to 292 lie on the Cytoplasmic side of the membrane; it reads RLRRLFRSKFEYRLQINDRLKQLDSTISRRLTL. Residues 293-313 traverse the membrane as a helical segment; it reads YIVVFVICWLPDVIQHFISFF. Residues 314-318 are Extracellular-facing; sequence SKCTF. A helical membrane pass occupies residues 319–339; that stretch reads FPLLILQNILTPSQGFWNFWI. The Cytoplasmic portion of the chain corresponds to 340 to 361; sequence YSYTNKIARFTPSNDENKRLLQ.

Belongs to the G-protein coupled receptor 5 family.

It localises to the membrane. Its function is as follows. Receptor for cAMP. This Dictyostelium discoideum (Social amoeba) protein is Cyclic AMP receptor-like protein C (crlC).